Consider the following 30-residue polypeptide: Photosystem I reaction center subunit XII (30 aa).

Residues 7–26 (IFVALLFALVSAVLAIRLGK) traverse the membrane as a helical segment.

It belongs to the PsaM family.

It is found in the plastid. The protein localises to the chloroplast thylakoid membrane. The protein is Photosystem I reaction center subunit XII of Porphyra purpurea (Red seaweed).